Here is a 468-residue protein sequence, read N- to C-terminus: Transmembrane protein 151A (468 aa).

The disordered stretch occupies residues 1–20 (MPEGEGGDCGEVPALVPDGE). The next 2 membrane-spanning stretches (helical) occupy residues 45 to 65 (CLLL…CRLA) and 98 to 118 (YLYI…AECW). Residues 384 to 438 (VSSNSLPPARPSGPRLPFSRSRLSLGAGGRTTPGVFRSLSGGPLGRRGEDTEPLE) form a disordered region.

The protein belongs to the TMEM151 family. In terms of tissue distribution, highly expressed in the central nervous system (CNS) including the cerebral cortex, hippocampus, spinal cord, brainstem, and thalamus. Expression is relatively low during postnatal stages but highly expressed at postnatal day 14 (P14), and declined in adulthood. Also expressed in the stomach, heart, liver, spleen, lung, kidney, and muscle.

The protein resides in the endoplasmic reticulum membrane. It localises to the cell projection. It is found in the axon. Its subcellular location is the dendrite. This chain is Transmembrane protein 151A (Tmem151a), found in Mus musculus (Mouse).